The following is a 612-amino-acid chain: Peroxisomal carnitine O-octanoyltransferase (612 aa).

N-acetylmethionine is present on M1. 2 positions are modified to N6-succinyllysine: K40 and K57. The active-site Proton acceptor is the H327. CoA-binding positions include K406 and 410-417 (KEKQLHPD). K406 is subject to N6-acetyllysine; alternate. K406 is subject to N6-succinyllysine; alternate. (R)-carnitine contacts are provided by Y439, T441, and T452. Residues 610-612 (PHL) carry the Microbody targeting signal motif.

Belongs to the carnitine/choline acetyltransferase family. In terms of assembly, monomer.

The protein resides in the peroxisome. It catalyses the reaction octanoyl-CoA + (R)-carnitine = O-octanoyl-(R)-carnitine + CoA. It carries out the reaction 4,8-dimethylnonanoyl-CoA + (R)-carnitine = O-4,8-dimethylnonanoyl-(R)-carnitine + CoA. It functions in the pathway lipid metabolism; fatty acid beta-oxidation. Its function is as follows. Beta-oxidation of fatty acids. The highest activity concerns the C6 to C10 chain length substrate. In Bos taurus (Bovine), this protein is Peroxisomal carnitine O-octanoyltransferase (CROT).